The chain runs to 507 residues: Probable allantoinase (507 aa).

Positions 105, 107, 195, 231, 294, and 368 each coordinate Zn(2+). K195 bears the N6-carboxylysine mark.

This sequence belongs to the metallo-dependent hydrolases superfamily. Allantoinase family. In terms of assembly, homotetramer. The cofactor is Zn(2+). Carboxylation allows a single lysine to coordinate two zinc ions.

It carries out the reaction (S)-allantoin + H2O = allantoate + H(+). It participates in nitrogen metabolism; (S)-allantoin degradation; allantoate from (S)-allantoin: step 1/1. Functionally, catalyzes the conversion of allantoin (5-ureidohydantoin) to allantoate by hydrolytic cleavage of the five-member hydantoin ring. Catalyzes the first step of the ureide allantoin degradation followed by the sequential activity of AAH, UGLYAH and UAH which allows a complete purine breakdown without the intermediate generation of urea. The chain is Probable allantoinase (ALN) from Oryza sativa subsp. japonica (Rice).